Reading from the N-terminus, the 436-residue chain is Histidinol dehydrogenase (436 aa).

Residues Tyr-136, Gln-198, and Asn-221 each coordinate NAD(+). 3 residues coordinate substrate: Ser-244, Gln-266, and His-269. Zn(2+) contacts are provided by Gln-266 and His-269. Residues Glu-334 and His-335 each act as proton acceptor in the active site. Substrate contacts are provided by His-335, Asp-368, Glu-422, and His-427. Asp-368 serves as a coordination point for Zn(2+). Residue His-427 coordinates Zn(2+).

This sequence belongs to the histidinol dehydrogenase family. Zn(2+) serves as cofactor.

The enzyme catalyses L-histidinol + 2 NAD(+) + H2O = L-histidine + 2 NADH + 3 H(+). The protein operates within amino-acid biosynthesis; L-histidine biosynthesis; L-histidine from 5-phospho-alpha-D-ribose 1-diphosphate: step 9/9. Functionally, catalyzes the sequential NAD-dependent oxidations of L-histidinol to L-histidinaldehyde and then to L-histidine. The sequence is that of Histidinol dehydrogenase from Dehalococcoides mccartyi (strain CBDB1).